The sequence spans 831 residues: DNA ligase (831 aa).

NAD(+) is bound by residues 34 to 38 (DADYD), 83 to 84 (SL), and Glu114. Lys116 serves as the catalytic N6-AMP-lysine intermediate. 4 residues coordinate NAD(+): Arg137, Glu174, Lys291, and Lys315. The Zn(2+) site is built by Cys409, Cys412, Cys427, and Cys433. Residues 749–831 (AHTAPLNGQS…LAFLGQYSAQ (83 aa)) enclose the BRCT domain.

Belongs to the NAD-dependent DNA ligase family. LigA subfamily. Mg(2+) serves as cofactor. It depends on Mn(2+) as a cofactor.

The catalysed reaction is NAD(+) + (deoxyribonucleotide)n-3'-hydroxyl + 5'-phospho-(deoxyribonucleotide)m = (deoxyribonucleotide)n+m + AMP + beta-nicotinamide D-nucleotide.. Its function is as follows. DNA ligase that catalyzes the formation of phosphodiester linkages between 5'-phosphoryl and 3'-hydroxyl groups in double-stranded DNA using NAD as a coenzyme and as the energy source for the reaction. It is essential for DNA replication and repair of damaged DNA. The sequence is that of DNA ligase from Xylella fastidiosa (strain 9a5c).